The chain runs to 114 residues: Iron-sulfur cluster insertion protein ErpA (114 aa).

Positions 42, 106, and 108 each coordinate iron-sulfur cluster.

This sequence belongs to the HesB/IscA family. In terms of assembly, homodimer. It depends on iron-sulfur cluster as a cofactor.

In terms of biological role, required for insertion of 4Fe-4S clusters for at least IspG. This is Iron-sulfur cluster insertion protein ErpA from Haemophilus ducreyi (strain 35000HP / ATCC 700724).